Reading from the N-terminus, the 2214-residue chain is MSVELPSLVVCGPQLEEIPDATYLARLRSSLLHDPYLRSLKQEALELHEMWPLLSATEPSLARFDAAPLLHSFAEWIRTGDSHVLRLAGGTLRNTQLALLTVLAHLLEYTTYLQHRHHHDHAQSEHAVLTAVHDGGVQGLSIGVLSAIAISCSQSRMHLARYGAVALRLAVCAGAWKDLDEMHAAEPPVCLEARWEGGGARAFKAVLDSYPQAYAHVREDASNATVIVPESSAAAMARKLEEDGIEARQVGLQGLSHRPDHFAACQKLFNLCSSLPMLRFPEHCHPLVPLTRNGNAEAVDDGASLHEMALRCILLEKPDSAAITAQCVAAISRQAGEPRVLLLGRVECIPRSVPARLIRPMAAGHSLYVYPDESIAIVGASCRFAGSETPAGFWDTLRERRSTLGKAPVWRGYGSEEEPFWGNFLASAGAFDHAFFRKSPREAAYMDPQHRLALHLAYEALESGGYFNPAAGTQTYDVGCYVGVYSSDYEDNVNARPPTPFSFTGTARAFASGRISQFFGWTGPSLIVDTACSSSGVAIHTACKAIQSGECTMALAGGVNLMTSPKSHQNLAAASLMSRTGQCKPFDASADGYCRGEGGGFVLLKRLSSAVADNDRVLGVLAASAINNSKGSLTITAPSLESQAALYQSVLRKAGMQPDQVSYVEAHGTGTQKGDPVECHSLRRVFGRSSRNSPPLRFGSVKGNIGHSEGASGVASLVKVLLMLQHGLIAPQANFSVLNPAAPNLEEANMEIPLYLQPWDAAFRAACVNNYGAAGNNTAMIVCQPPATQPVSRPSSVQKRHQYPFMLTAHSDASLRQHCRILLQFVEDQQAWAGDDLLASLAFHLAQRQSHQLGYRTAFSARSIDDLKARLGEQNTQTRGNCNPVVLVFAGQTGHRPRLSEEAYHSSFLLQHHLDRCDRTLQTLGLRGLFPQVFGTQAVDDLVDLHCMLFSIQYATAAAWIDAGLDVRKLVGHSLGQLTALCVARVLTLRDALKMISGRAALIQSKWGPEQGCMLSVDSDAVTVRALIDSMASEEKVEIACYNAPSSHVVVGKAGATAAFESAALSAGVRTKRLAITHAFHSPMVDSIMEDYESLLRELQFHSPTIPIEPCEQSGGSWENLTPERVARQSRAPVYFGAAVSRVERELGSCVWLEAGAGPAGVTMARRAASSSSHAFLSARLGSPDAMDSLADTTLSLWREGVRVQFWPFHPWQRHCFRLLELPPYQFETTHHWLPFASAPESAAQQPTTANDVAPQLVSVVRSSGGADPEAAEFTINQHSEEYALFVGGRTVLGHALSPPSVYLESAARALGLVSAAAGGPAALPPHFEQVQLHAPLGIDPRRRIRLRLQKHNTSAWEFVFDSQAPALDGGQTFQLQASGIIKSQEQDRAVAGPYRPLLRRLIDHERCRVLLEDSGASVVQGAFVKNILGRVASYEDSYFGIRSITSKGHEAVGVVDVPEIAHQRCAETRVNPPLLDNFMLVAEMHAGNLDACGSDQMYVCNGFDALVPHSNDGSLRGPFTVYSKLERESDRVFVGDVFVLTGGQKTLSLAILGARFSKVPVRSLQRALEAANGSPNVRTAEALDHSAVAIEARDSALTSPPIRPHAPPSSDAVSTISLNEVKTTTERVISETTGVPRERINDATLLGDLGVDSLMATELQVRFSDVLHVDLAIGTLCEHGMTAGRLCQEIHSRLSGVPQLSPHDTDRSSDLSAGQPPSTPKASTQEQEHFIVELSKLLAEHLNCSPDIPPETPLALMGLDSLLAIQLASDMESRFGKKSSPMNIDENTTFSDLCRVLSGADLPGFPRTSDNRRSEEGSVGHVGPEKSEASFFREREDVIKLEFDRAKQRYGVFSEQAGLAGFYARVYPRQMALVLAYIVEAFRTLGCDVATLRAGERLPPIPHEPRYEKLVRRYLQLLEDAGLITSSGEHPPAHLRTAKALEHAESSRLHRAILADFPAYRPDHRLLQLTGPRLADCVSGKVDPLQLLFHGPASRQLLEAFYVSSPMFATATRMMSEFVGQLLRKHGGCSERLRVLEVGAGTGATTQQLLDQLVASGAAFTYTFTDVSSSLVAAARRRLEARYAAAGHEMHFAVLDIERPPPQRLLHSQDLVVASNVLHATRSLSDTCSNVQRLLRPGCGVLCLLELTRPLPWLDCVFGLLDGWWRFADSRTYPLVDEWRWKACLLNAGFRHVDWTDDESREADLFRWILALA.

Residues 75 to 178 (EWIRTGDSHV…LAVCAGAWKD (104 aa)) are N-terminal acylcarrier protein transacylase domain (SAT). One can recognise a Ketosynthase family 3 (KS3) domain in the interval 372–784 (DESIAIVGAS…GNNTAMIVCQ (413 aa)). Catalysis depends on for beta-ketoacyl synthase activity residues Cys-532, His-667, and His-707. The segment at 888–1184 (VFAGQTGHRP…AFLSARLGSP (297 aa)) is malonyl-CoA:ACP transacylase (MAT) domain. Residue Ser-974 is the For acyl/malonyl transferase activity of the active site. Positions 1255-1389 (PQLVSVVRSS…GIIKSQEQDR (135 aa)) are N-terminal hotdog fold. The PKS/mFAS DH domain occupies 1255-1566 (PQLVSVVRSS…FSKVPVRSLQ (312 aa)). The segment at 1265–1560 (GGADPEAAEF…AILGARFSKV (296 aa)) is product template (PT) domain. The tract at residues 1416–1566 (GASVVQGAFV…FSKVPVRSLQ (151 aa)) is C-terminal hotdog fold. Carrier domains follow at residues 1620–1695 (NEVK…HSRL) and 1722–1802 (KAST…SGAD). An O-(pantetheine 4'-phosphoryl)serine modification is found at Ser-1654. The disordered stretch occupies residues 1698 to 1728 (VPQLSPHDTDRSSDLSAGQPPSTPKASTQEQ). Residues 1711–1726 (DLSAGQPPSTPKASTQ) show a composition bias toward polar residues. O-(pantetheine 4'-phosphoryl)serine is present on Ser-1762. The tract at residues 1805–1827 (GFPRTSDNRRSEEGSVGHVGPEK) is disordered. Residues 1810–1827 (SDNRRSEEGSVGHVGPEK) show a composition bias toward basic and acidic residues. A methyltransferase (CMeT) domain region spans residues 1958–2210 (FPAYRPDHRL…SREADLFRWI (253 aa)).

It functions in the pathway secondary metabolite biosynthesis; terpenoid biosynthesis. Non-reducing polyketide synthase; part of the gene cluster that mediates the biosynthesis of diterpenoid pyrones. The first step of the pathway is the synthesis of the alpha-pyrone moiety by the polyketide synthase dpmpA via condensation of one acetyl-CoA starter unit with 3 malonyl-CoA units and 2 methylations. The alpha-pyrone is then combined with geranylgeranyl pyrophosphate (GGPP) formed by the GGPP synthase dpmpD through the action of the prenyltransferase dpmpC to yield a linear alpha-pyrone diterpenoid. Subsequent steps in the diterpenoid pyrone biosynthetic pathway involve the decalin core formation, which is initiated by the epoxidation of the C10-C11 olefin by the FAD-dependent oxidoreductase dpmpE, and is followed by a cyclization cascade catalyzed by the terpene cyclase dpmpB. The short chain dehydrogenase/reductase dpmpG then oxidizes the 8S hydroxy group to a ketone and the short chain dehydrogenase/reductase dpmpH reduces the ketone to the 8R hydroxy group to yield higginsianin B. Higginsianin B is further methylated by the methyltransferase dpmpI to produce the intermediate named FDDP B. The cytochrome P450 monooxygenase dpmpJ then oxidizes the C-26 methyl to primary alcohol, producing the final diterpenoid pyrone with a C-26 primary alcohol on the gamma-pyrone moiety named FDDP C. In Macrophomina phaseolina (strain MS6) (Charcoal rot fungus), this protein is Non-reducing polyketide synthase dpmpA.